Reading from the N-terminus, the 500-residue chain is Probable cytosol aminopeptidase 1 (500 aa).

Positions 263 and 268 each coordinate Mn(2+). The active site involves Lys275. Mn(2+) is bound by residues Asp287, Asp346, and Glu348. The active site involves Arg350.

This sequence belongs to the peptidase M17 family. Mn(2+) is required as a cofactor.

The protein resides in the cytoplasm. It catalyses the reaction Release of an N-terminal amino acid, Xaa-|-Yaa-, in which Xaa is preferably Leu, but may be other amino acids including Pro although not Arg or Lys, and Yaa may be Pro. Amino acid amides and methyl esters are also readily hydrolyzed, but rates on arylamides are exceedingly low.. The enzyme catalyses Release of an N-terminal amino acid, preferentially leucine, but not glutamic or aspartic acids.. Presumably involved in the processing and regular turnover of intracellular proteins. Catalyzes the removal of unsubstituted N-terminal amino acids from various peptides. This is Probable cytosol aminopeptidase 1 (pepA1) from Shewanella oneidensis (strain ATCC 700550 / JCM 31522 / CIP 106686 / LMG 19005 / NCIMB 14063 / MR-1).